Reading from the N-terminus, the 400-residue chain is Diphosphomevalonate decarboxylase (400 aa).

Position 2 is an N-acetylalanine (Ala-2). (R)-5-diphosphomevalonate contacts are provided by residues 23 to 26 (YWGK) and Arg-78. Position 96 is a phosphoserine (Ser-96). (R)-5-diphosphomevalonate contacts are provided by residues 156-161 (SGSACR) and Thr-212.

This sequence belongs to the diphosphomevalonate decarboxylase family. In terms of assembly, homodimer. As to expression, expressed in heart, skeletal muscle, lung, liver, brain, pancreas, kidney and placenta.

It is found in the cytoplasm. The enzyme catalyses (R)-5-diphosphomevalonate + ATP = isopentenyl diphosphate + ADP + phosphate + CO2. It participates in steroid biosynthesis; cholesterol biosynthesis. Its function is as follows. Catalyzes the ATP dependent decarboxylation of (R)-5-diphosphomevalonate to form isopentenyl diphosphate (IPP). Functions in the mevalonate (MVA) pathway leading to isopentenyl diphosphate (IPP), a key precursor for the biosynthesis of isoprenoids and sterol synthesis. This chain is Diphosphomevalonate decarboxylase (MVD), found in Homo sapiens (Human).